The primary structure comprises 557 residues: Predicted GPI-anchored protein 17 (557 aa).

Residues 1–19 (MKFSTVFTAIFALGTAVSA) form the signal peptide. N-linked (GlcNAc...) asparagine glycans are attached at residues Asn-62, Asn-116, Asn-284, and Asn-309. A coiled-coil region spans residues 320 to 355 (LRKREYNDAVEAALRDIQKREEGIDDVEIALRKMKR). N-linked (GlcNAc...) asparagine glycosylation is found at Asn-376, Asn-471, and Asn-520. Residue Asn-533 is the site of GPI-anchor amidated asparagine attachment. The propeptide at 534 to 557 (AGSSYGPGFYSTIFAVFGLFAMMI) is removed in mature form.

In terms of processing, substrate for cleavage by KEX2 in vitro.

The protein resides in the cell membrane. Functionally, predicted GPI-anchored protein which may have a role during host infection. The protein is Predicted GPI-anchored protein 17 (PGA17) of Candida albicans (strain SC5314 / ATCC MYA-2876) (Yeast).